The chain runs to 523 residues: 2-isopropylmalate synthase (523 aa).

Positions 12 to 274 (VVIFDTTLRD…WNKIDTTQLT (263 aa)) constitute a Pyruvate carboxyltransferase domain. Mn(2+) is bound by residues aspartate 21, histidine 209, histidine 211, and asparagine 245. Residues 398-523 (KLLSLSVIAG…AQGAAAAAAS (126 aa)) form a regulatory domain region.

It belongs to the alpha-IPM synthase/homocitrate synthase family. LeuA type 1 subfamily. Homodimer. Requires Mn(2+) as cofactor.

The protein resides in the cytoplasm. The catalysed reaction is 3-methyl-2-oxobutanoate + acetyl-CoA + H2O = (2S)-2-isopropylmalate + CoA + H(+). The protein operates within amino-acid biosynthesis; L-leucine biosynthesis; L-leucine from 3-methyl-2-oxobutanoate: step 1/4. Functionally, catalyzes the condensation of the acetyl group of acetyl-CoA with 3-methyl-2-oxobutanoate (2-ketoisovalerate) to form 3-carboxy-3-hydroxy-4-methylpentanoate (2-isopropylmalate). This chain is 2-isopropylmalate synthase, found in Bradyrhizobium sp. (strain BTAi1 / ATCC BAA-1182).